The primary structure comprises 81 residues: Photosystem I iron-sulfur center (81 aa).

2 consecutive 4Fe-4S ferredoxin-type domains span residues 2–31 and 39–68; these read AHTV…MVPW and IASA…IRVY. The [4Fe-4S] cluster site is built by Cys-11, Cys-14, Cys-17, Cys-21, Cys-48, Cys-51, Cys-54, and Cys-58.

In terms of assembly, the eukaryotic PSI reaction center is composed of at least 11 subunits. The cofactor is [4Fe-4S] cluster.

It is found in the plastid. Its subcellular location is the cyanelle thylakoid membrane. The catalysed reaction is reduced [plastocyanin] + hnu + oxidized [2Fe-2S]-[ferredoxin] = oxidized [plastocyanin] + reduced [2Fe-2S]-[ferredoxin]. Its function is as follows. Apoprotein for the two 4Fe-4S centers FA and FB of photosystem I (PSI); essential for photochemical activity. FB is the terminal electron acceptor of PSI, donating electrons to ferredoxin. The C-terminus interacts with PsaA/B/D and helps assemble the protein into the PSI complex. Required for binding of PsaD and PsaE to PSI. PSI is a cytochrome c6-ferredoxin oxidoreductase, converting photonic excitation into a charge separation, which transfers an electron from the donor P700 chlorophyll pair to the spectroscopically characterized acceptors A0, A1, FX, FA and FB in turn. In Cyanophora paradoxa, this protein is Photosystem I iron-sulfur center.